Here is a 271-residue protein sequence, read N- to C-terminus: Phosphatidylinositol transfer protein beta isoform (271 aa).

An N6-acetyllysine modification is found at K215. S262 carries the post-translational modification Phosphoserine.

It belongs to the PtdIns transfer protein family. PI transfer class I subfamily. In terms of processing, constitutive phosphorylation of Ser-262 has no effect on phospholipid transfer activity but is required for Golgi targeting. As to expression, expressed abundantly in brain, kidney, liver, and lung, but in a lesser amount in testis.

The protein localises to the golgi apparatus. It is found in the golgi apparatus membrane. Its subcellular location is the endoplasmic reticulum membrane. It catalyses the reaction a 1,2-diacyl-sn-glycero-3-phosphocholine(in) = a 1,2-diacyl-sn-glycero-3-phosphocholine(out). The catalysed reaction is a 1,2-diacyl-sn-glycero-3-phospho-(1D-myo-inositol)(in) = a 1,2-diacyl-sn-glycero-3-phospho-(1D-myo-inositol)(out). The enzyme catalyses an N-(acyl)-sphingosylphosphocholine(in) = an N-(acyl)-sphingosylphosphocholine(out). Its activity is regulated as follows. Phosphatidylinositol transfer activity is inhibited by N-ethylmaleimide. In terms of biological role, catalyzes the transfer of phosphatidylinositol between membranes. Also catalyzes the transfer of phosphatidylcholine and sphingomyelin between membranes. Required for COPI-mediated retrograde transport from the Golgi to the endoplasmic reticulum; phosphatidylinositol and phosphatidylcholine transfer activity is essential for this function. This Rattus norvegicus (Rat) protein is Phosphatidylinositol transfer protein beta isoform (Pitpnb).